Reading from the N-terminus, the 1154-residue chain is Paired amphipathic helix protein pst3 (1154 aa).

2 disordered regions span residues 1–71 and 91–110; these read MDVM…RSVT and SGKDGSISSQNAEGLSSSSN. A compositionally biased stretch (basic and acidic residues) spans 9 to 27; the sequence is DSERDNPGDKVETQSDKNH. Polar residues-rich tracts occupy residues 32 to 45 and 100 to 110; these read SPSQSQSPVNTSLH and QNAEGLSSSSN. Residues 111–181 enclose the PAH 1 domain; that stretch reads RPLDVNDALS…EGFNTFLPSG (71 aa). Disordered regions lie at residues 199-249 and 321-376; these read GTPM…STEN and DNVD…KTSR. Residues 228 to 241 are compositionally biased toward low complexity; sequence STSPTDSQPQPSAP. One can recognise a PAH 2 domain in the interval 252–322; sequence PRVDFNYAIA…EEFKLFLPDN (71 aa). Composition is skewed to polar residues over residues 323-337 and 365-376; these read VDSTEPSTPNVQKSP and AQISRSISKTSR. The 70-residue stretch at 403–472 folds into the PAH 3 domain; it reads SPYAATQEEL…LWFSEFIRWS (70 aa). The interval 797–824 is disordered; that stretch reads NSNNTNVSFQTDETQTEDETMSDIHPDD.

The protein localises to the nucleus. This Schizosaccharomyces pombe (strain 972 / ATCC 24843) (Fission yeast) protein is Paired amphipathic helix protein pst3 (pst3).